The sequence spans 147 residues: F420H(2)-dependent reductase Rv1155 (147 aa).

Residues Q32, Q37, S50, A56–N60, W77–Y79, and H138 contribute to the coenzyme F420-(gamma-Glu)n site.

Belongs to the F420H(2)-dependent biliverdin reductase family. In terms of assembly, homodimer.

Functionally, F420H(2)-dependent reductase able to catalyze the reduction of biliverdin-IXalpha to bilirubin-IXalpha in vitro. However, kinetic parameters show that it is less efficient than the biliverdin reductase Rv2074 and suggest biliverdin-IXalpha is unlikely to be the native substrate of Rv1155, which probably catalyzes the reduction of an alternative molecule in vivo. Binds coenzyme F420, but does not bind FMN or other flavins. Cannot use pyridoxine 5'-phosphate, pyridoxamine 5'-phosphate, pyridoxal 5'-phosphate (PLP), the anti-tuberculosis drug PA-824 or aflatoxin analogs as substrates. The polypeptide is F420H(2)-dependent reductase Rv1155 (Mycobacterium tuberculosis (strain ATCC 25618 / H37Rv)).